The chain runs to 448 residues: MLSCVFSDTIFLSSFLAVTLICMTTALWGTILLISKQPLLSESLSHASYPGLLVGALMAQYVFSLQASIFWIVLFGCAASVFGYGIIVFLGKVCKLHKDSALCFVLVVFFAIGVILASYVKESSPTLYNRINAYLYGQAATLGFLEATLAAIVFCASLFALWWWYRQIVVTTFDKDFAVTCGLKTVLYEALSLIFISLVIVSGVRSVGIVLISAMFVAPSLGARQLSDRLSTILILSAFFGGISGALGSYISVAFTCRAIIGQQAVPVTLPTGPLVVICAGLLAGLCLLFSPKSGWVIRFVRRKHFSFSKDQEHLLKVFWHISHNRLENISVRDFVCSYKYQEYFGPKPFPRWRVQILEWRGYVKKEQDYYRLTKKGRSEALRLVRAHRLWESYLVNSLDFSKESVHELAEEIEHVLTEELDHTLTEILNDPCYDPHRQIIPNKKKEV.

A run of 8 helical transmembrane segments spans residues 15 to 35 (FLAV…LLIS), 47 to 67 (ASYP…SLQA), 69 to 89 (IFWI…IIVF), 100 to 120 (SALC…ASYV), 144 to 164 (FLEA…LWWW), 193 to 213 (LIFI…VLIS), 233 to 253 (ILIL…YISV), and 270 to 290 (LPTG…CLLF).

It belongs to the ABC-3 integral membrane protein family.

It is found in the cell inner membrane. Functionally, part of an ATP-driven transport system CPn_0346/CPn_0347/CPn_0348/CPn_0349 for a metal. This chain is Probable metal transport system membrane protein CPn_0347/CP_0413/CPj0347/CpB0354, found in Chlamydia pneumoniae (Chlamydophila pneumoniae).